A 137-amino-acid chain; its full sequence is MPSQKSPTKRSPTKRSPQKGGKGAKRGGKAGKRRRGVAVKRRRRRRESYGIYIYKVLKQVHPDTGISSRAMSVMNSFVNDVFERIASEAGRLTTYNRRNTVSSREVQTAVRLLLPGELAKHAVSEGTKAVTKYTTSR.

The interval 1 to 43 (MPSQKSPTKRSPTKRSPQKGGKGAKRGGKAGKRRRGVAVKRRR) is disordered. Short sequence motifs (SPKK motif) lie at residues 6–9 (SPTK), 11–14 (SPTK), and 16–19 (SPQK). A compositionally biased stretch (basic residues) spans 7–43 (PTKRSPTKRSPQKGGKGAKRGGKAGKRRRGVAVKRRR). Ser11 and Ser16 each carry phosphoserine. O-linked (GlcNAc) serine glycosylation is present at Ser124. Residue Lys132 forms a Glycyl lysine isopeptide (Lys-Gly) (interchain with G-Cter in ubiquitin) linkage.

The protein belongs to the histone H2B family. In terms of assembly, the nucleosome is a histone octamer containing two molecules each of H2A, H2B, H3 and H4 assembled in one H3-H4 heterotetramer and two H2A-H2B heterodimers. The octamer wraps approximately 147 bp of DNA. Monoubiquitination of Lys-132 gives a specific tag for epigenetic transcriptional activation and is also prerequisite for histone H3 'Lys-4' and 'Lys-79' methylation. In terms of processing, phosphorylated on SPKK motifs 2 and 3; which may regulate DNA binding. Dephosphorylated during maturation of spermatids to mature sperm and rephosphorylated at fertilization. Post-translationally, glcNAcylation at Ser-124 promotes monoubiquitination of Lys-132. It fluctuates in response to extracellular glucose, and associates with transcribed genes.

The protein localises to the nucleus. Its subcellular location is the chromosome. Core component of nucleosome. Nucleosomes wrap and compact DNA into chromatin, limiting DNA accessibility to the cellular machineries which require DNA as a template. Histones thereby play a central role in transcription regulation, DNA repair, DNA replication and chromosomal stability. DNA accessibility is regulated via a complex set of post-translational modifications of histones, also called histone code, and nucleosome remodeling. The sequence is that of Histone H2B.1, sperm from Psammechinus miliaris (Green sea urchin).